Consider the following 596-residue polypeptide: Tripeptidyl-peptidase SED2 (596 aa).

A signal peptide spans 1 to 16 (MLVLKFVCLLASVAAA). The propeptide at 18-203 (PTSWSSHKVV…LEAMSEEEFS (186 aa)) is removed in mature form. The Peptidase S53 domain maps to 210 to 596 (LVTTACLREL…NFQALTKVLP (387 aa)). A glycan (N-linked (GlcNAc...) asparagine) is linked at asparagine 265. Catalysis depends on charge relay system residues glutamate 286 and aspartate 290. Asparagine 403 carries N-linked (GlcNAc...) asparagine glycosylation. The active-site Charge relay system is serine 501. Positions 543 and 544 each coordinate Ca(2+). The N-linked (GlcNAc...) asparagine glycan is linked to asparagine 572. Ca(2+) contacts are provided by glycine 576 and aspartate 578.

Requires Ca(2+) as cofactor.

The protein resides in the secreted. It localises to the extracellular space. It catalyses the reaction Release of an N-terminal tripeptide from a polypeptide.. In terms of biological role, secreted tripeptidyl-peptidase which degrades proteins at acidic pHs and is involved in virulence. The polypeptide is Tripeptidyl-peptidase SED2 (SED2) (Arthroderma otae (strain ATCC MYA-4605 / CBS 113480) (Microsporum canis)).